The primary structure comprises 99 residues: Transposase InsE for insertion sequence IS3A (99 aa).

Residues 1 to 21 form a disordered region; the sequence is MTKTVSTSKKPRKQHSPEFRS.

This sequence belongs to the transposase 8 family.

Functionally, involved in the transposition of the insertion sequence IS3. This Escherichia coli (strain K12) protein is Transposase InsE for insertion sequence IS3A (insE1).